The primary structure comprises 639 residues: MRMTTGQALVKFLDNQYVSFDGKEEKFVDGIFTIFGHGIVVGLGEALYENPGELKVYQGRNEQGMAHVSTAFAKQNNRRKIIACSSSVGPGAANMVTAAATATVNNIPLLLLPGDSFATRQPDPVLQQIEQSYNLGITTNDAFKPVCKYWDRINRPEQLMSAMINAMRVLTDPAETGAVCIALPQDVQGEAYDFPEYFFKKRVHRITRPLAVQEEFEEALDIIMNKKKPIIICGGGVRYSEAGEALVDFAEEFNIPICETQAGKSAIKSSHPLNLGGIGVTGNLAANMIAKDTDLVIGVGTRFSDFTTSSKSLFKNPEVDFITVNVSKFHGGKMDAHKIIGDAKVCIEELQAMLEANNYESSYEDEIVNAKKAWKEEMKRLTNIKYDENFEALIKPKREGCIEEFSVLTGGLITQTAALGVIRETIDDDAIVVGAAGSLPGDLQRMWETDARDSYHMEYGYSCMGYEIAATLGAKLAEPEREVYSMVGDGSYLMLHSEMVTAMQEQKKINILLFDNCGFGCINNLQMSNGIGSLATEFRYRDENGKLEGGLIPIDFAKVASGYGLKTYSVKTLAQLKEALEDAKKQKVSTLIDIKVLPKTMTDGYDAWWHVGIAGESEIDGVNKAFENKEKNLKAARRY.

Position 62 (E62) interacts with thiamine diphosphate. The interval 438–518 (SLPGDLQRMW…INILLFDNCG (81 aa)) is thiamine pyrophosphate binding. The Mg(2+) site is built by D489 and N516.

The protein belongs to the TPP enzyme family. It depends on Mg(2+) as a cofactor. Requires thiamine diphosphate as cofactor.

It catalyses the reaction 3D-3,5/4-trihydroxycyclohexane-1,2-dione + H2O = 5-deoxy-D-glucuronate + H(+). It functions in the pathway polyol metabolism; myo-inositol degradation into acetyl-CoA; acetyl-CoA from myo-inositol: step 3/7. Functionally, involved in the cleavage of the C1-C2 bond of 3D-(3,5/4)-trihydroxycyclohexane-1,2-dione (THcHDO) to yield 5-deoxy-glucuronate (5DG). The sequence is that of 3D-(3,5/4)-trihydroxycyclohexane-1,2-dione hydrolase from Clostridium perfringens (strain 13 / Type A).